A 209-amino-acid polypeptide reads, in one-letter code: Thiamine-phosphate synthase (209 aa).

4-amino-2-methyl-5-(diphosphooxymethyl)pyrimidine is bound by residues 36-40 (QYRDK) and Asn68. Mg(2+)-binding residues include Asp69 and Asp87. Thr106 is a binding site for 4-amino-2-methyl-5-(diphosphooxymethyl)pyrimidine. 2-[(2R,5Z)-2-carboxy-4-methylthiazol-5(2H)-ylidene]ethyl phosphate is bound at residue 133-135 (SST). Residue Lys136 coordinates 4-amino-2-methyl-5-(diphosphooxymethyl)pyrimidine. Gly163 lines the 2-[(2R,5Z)-2-carboxy-4-methylthiazol-5(2H)-ylidene]ethyl phosphate pocket.

The protein belongs to the thiamine-phosphate synthase family. The cofactor is Mg(2+).

It catalyses the reaction 2-[(2R,5Z)-2-carboxy-4-methylthiazol-5(2H)-ylidene]ethyl phosphate + 4-amino-2-methyl-5-(diphosphooxymethyl)pyrimidine + 2 H(+) = thiamine phosphate + CO2 + diphosphate. It carries out the reaction 2-(2-carboxy-4-methylthiazol-5-yl)ethyl phosphate + 4-amino-2-methyl-5-(diphosphooxymethyl)pyrimidine + 2 H(+) = thiamine phosphate + CO2 + diphosphate. The enzyme catalyses 4-methyl-5-(2-phosphooxyethyl)-thiazole + 4-amino-2-methyl-5-(diphosphooxymethyl)pyrimidine + H(+) = thiamine phosphate + diphosphate. It participates in cofactor biosynthesis; thiamine diphosphate biosynthesis; thiamine phosphate from 4-amino-2-methyl-5-diphosphomethylpyrimidine and 4-methyl-5-(2-phosphoethyl)-thiazole: step 1/1. Its function is as follows. Condenses 4-methyl-5-(beta-hydroxyethyl)thiazole monophosphate (THZ-P) and 2-methyl-4-amino-5-hydroxymethyl pyrimidine pyrophosphate (HMP-PP) to form thiamine monophosphate (TMP). The sequence is that of Thiamine-phosphate synthase from Pseudomonas aeruginosa (strain LESB58).